We begin with the raw amino-acid sequence, 151 residues long: UPF0208 membrane protein plu3094 (151 aa).

2 consecutive transmembrane segments (helical) span residues 46–65 (FGIR…QIAL) and 69–91 (LGPA…WWLG).

The protein belongs to the UPF0208 family.

Its subcellular location is the cell inner membrane. This is UPF0208 membrane protein plu3094 from Photorhabdus laumondii subsp. laumondii (strain DSM 15139 / CIP 105565 / TT01) (Photorhabdus luminescens subsp. laumondii).